A 1048-amino-acid polypeptide reads, in one-letter code: B3 domain-containing protein Os02g0598200 (1048 aa).

The tract at residues 1-345 (MDGAVRGQGC…QKERVASSDN (345 aa)) is disordered. The span at 16–25 (SFNKTKKKNR) shows a compositional bias: basic residues. Composition is skewed to basic and acidic residues over residues 26–134 (NCSD…SDDM), 151–162 (KKNSRNDADEEK), 169–214 (CSDD…GDKK), 243–253 (KNMKSDGDSYK), 281–295 (AKER…MEMK), and 332–345 (LKRE…SSDN). Residues 375-468 (AFAFFKFVRD…TFSVRVFGID (94 aa)) constitute a DNA-binding region (TF-B3 1). Positions 505-528 (QYQDSEDIHDGPNVSGESPRSKEP) are disordered. A DNA-binding region (TF-B3 2) is located at residues 953-1048 (LQFCIPSTIQ…LAFQVYITRK (96 aa)).

The protein resides in the nucleus. The polypeptide is B3 domain-containing protein Os02g0598200 (Oryza sativa subsp. japonica (Rice)).